The following is a 266-amino-acid chain: Apolipoprotein A-I (266 aa).

The first 18 residues, 1-18 (MKAVVLTLAVLFLTGSQA), serve as a signal peptide directing secretion. 2 consecutive repeat copies span residues 67–88 (LKLL…EQIG) and 89–110 (PVTQ…QEMN). The 10 X approximate tandem repeats stretch occupies residues 67–266 (LKLLDNWDSL…DEATKKLNSQ (200 aa)). Methionine 109 carries the methionine sulfoxide modification. Residues 111–121 (KDLEEVKKKVQ) form a 3; half-length repeat. 5 tandem repeats follow at residues 122–143 (PYLD…QKVA), 144–165 (PLGA…EKLS), 166–187 (PLGE…AQLA), 188–209 (PYGE…EGGG), and 210–231 (AALT…EKAK). Residues 232 to 242 (PALEDLRQGLL) form a 9; half-length repeat. Repeat unit 10 spans residues 243–266 (PVLENFRVSLLAAVDEATKKLNSQ).

Belongs to the apolipoprotein A1/A4/E family. In terms of assembly, homodimer. Interacts with APOA1BP and CLU. Component of a sperm activating protein complex (SPAP), consisting of APOA1, an immunoglobulin heavy chain, an immunoglobulin light chain and albumin. Interacts with NDRG1. Interacts with SCGB3A2. Interacts with NAXE and YJEFN3. Glycosylated. Post-translationally, palmitoylated. In terms of processing, phosphorylation sites are present in the extracellular medium.

The protein localises to the secreted. Participates in the reverse transport of cholesterol from tissues to the liver for excretion by promoting cholesterol efflux from tissues and by acting as a cofactor for the lecithin cholesterol acyltransferase (LCAT). As part of the SPAP complex, activates spermatozoa motility. The polypeptide is Apolipoprotein A-I (APOA1) (Leptonychotes weddellii (Weddell seal)).